Reading from the N-terminus, the 314-residue chain is Quinolinate synthase (314 aa).

Residues H27 and S44 each contribute to the iminosuccinate site. Residue C89 participates in [4Fe-4S] cluster binding. Residues Y115 to N117 and S132 each bind iminosuccinate. C175 contacts [4Fe-4S] cluster. Iminosuccinate is bound by residues H201–E203 and T218. C271 serves as a coordination point for [4Fe-4S] cluster.

It belongs to the quinolinate synthase family. Type 2 subfamily. [4Fe-4S] cluster is required as a cofactor.

Its subcellular location is the cytoplasm. The enzyme catalyses iminosuccinate + dihydroxyacetone phosphate = quinolinate + phosphate + 2 H2O + H(+). It participates in cofactor biosynthesis; NAD(+) biosynthesis; quinolinate from iminoaspartate: step 1/1. Catalyzes the condensation of iminoaspartate with dihydroxyacetone phosphate to form quinolinate. This Ehrlichia chaffeensis (strain ATCC CRL-10679 / Arkansas) protein is Quinolinate synthase.